The chain runs to 354 residues: DNA integrity scanning protein DisA (354 aa).

Residues 6–144 enclose the DAC domain; it reads GMKIKDTLKI…GDIKYVLRDS (139 aa). Residues Gly73, Leu91, and 104–108 contribute to the ATP site; that span reads TRHRT.

The protein belongs to the DisA family. Homooctamer. The cofactor is Mg(2+).

The catalysed reaction is 2 ATP = 3',3'-c-di-AMP + 2 diphosphate. In terms of biological role, participates in a DNA-damage check-point that is active prior to asymmetric division when DNA is damaged. DisA forms globular foci that rapidly scan along the chromosomes during sporulation, searching for lesions. When a lesion is present, DisA pauses at the lesion site. This triggers a cellular response that culminates in a temporary block in sporulation initiation. Its function is as follows. Also has diadenylate cyclase activity, catalyzing the condensation of 2 ATP molecules into cyclic di-AMP (c-di-AMP). c-di-AMP acts as a signaling molecule that couples DNA integrity with progression of sporulation. The rise in c-di-AMP level generated by DisA while scanning the chromosome, operates as a positive signal that advances sporulation; upon encountering a lesion, the DisA focus arrests at the damaged site and halts c-di-AMP synthesis. This Clostridium botulinum (strain Alaska E43 / Type E3) protein is DNA integrity scanning protein DisA.